We begin with the raw amino-acid sequence, 207 residues long: 2,3-bisphosphoglycerate-dependent phosphoglycerate mutase (207 aa).

Residues 10–17 (RHGQSEWN), 23–24 (TG), Arg62, 89–92 (ERDY), Lys100, 116–117 (RR), and 160–161 (GN) each bind substrate. Residue His11 is the Tele-phosphohistidine intermediate of the active site. Glu89 acts as the Proton donor/acceptor in catalysis.

Belongs to the phosphoglycerate mutase family. BPG-dependent PGAM subfamily. Homodimer.

The enzyme catalyses (2R)-2-phosphoglycerate = (2R)-3-phosphoglycerate. It functions in the pathway carbohydrate degradation; glycolysis; pyruvate from D-glyceraldehyde 3-phosphate: step 3/5. Catalyzes the interconversion of 2-phosphoglycerate and 3-phosphoglycerate. In Bradyrhizobium diazoefficiens (strain JCM 10833 / BCRC 13528 / IAM 13628 / NBRC 14792 / USDA 110), this protein is 2,3-bisphosphoglycerate-dependent phosphoglycerate mutase.